The following is a 170-amino-acid chain: ATP synthase subunit b (170 aa).

A helical membrane pass occupies residues 22-41; the sequence is ILNWAVVVFGLYKFLPGFLG. Residues 72–98 are disordered; it reads AKKDLSSAEEKASQIKADSLKRSESIR.

The protein belongs to the ATPase B chain family. As to quaternary structure, F-type ATPases have 2 components, F(1) - the catalytic core - and F(0) - the membrane proton channel. F(1) has five subunits: alpha(3), beta(3), gamma(1), delta(1), epsilon(1). F(0) has four main subunits: a(1), b(1), b'(1) and c(10-14). The alpha and beta chains form an alternating ring which encloses part of the gamma chain. F(1) is attached to F(0) by a central stalk formed by the gamma and epsilon chains, while a peripheral stalk is formed by the delta, b and b' chains.

Its subcellular location is the cellular thylakoid membrane. Functionally, f(1)F(0) ATP synthase produces ATP from ADP in the presence of a proton or sodium gradient. F-type ATPases consist of two structural domains, F(1) containing the extramembraneous catalytic core and F(0) containing the membrane proton channel, linked together by a central stalk and a peripheral stalk. During catalysis, ATP synthesis in the catalytic domain of F(1) is coupled via a rotary mechanism of the central stalk subunits to proton translocation. Its function is as follows. Component of the F(0) channel, it forms part of the peripheral stalk, linking F(1) to F(0). The polypeptide is ATP synthase subunit b (Prochlorococcus marinus (strain MIT 9301)).